We begin with the raw amino-acid sequence, 84 residues long: Small ribosomal subunit protein uS17 (84 aa).

It belongs to the universal ribosomal protein uS17 family. Part of the 30S ribosomal subunit.

Its function is as follows. One of the primary rRNA binding proteins, it binds specifically to the 5'-end of 16S ribosomal RNA. In Photobacterium profundum (strain SS9), this protein is Small ribosomal subunit protein uS17.